A 310-amino-acid chain; its full sequence is Olfactory receptor 5AR1 (310 aa).

The Extracellular portion of the chain corresponds to 1 to 25 (MDKENHSVVTEFVFMGITQDPQLQI). A glycan (N-linked (GlcNAc...) asparagine) is linked at asparagine 5. Residues 26–46 (IFFVVFLLVYLVNVIGNVGMI) traverse the membrane as a helical segment. Over 47–54 (ILIITDSQ) the chain is Cytoplasmic. A helical transmembrane segment spans residues 55–75 (LHTPMYFFLCNLSFVDLGYSS). At 76 to 99 (AIAPRMLADFLTKHKVISFSSCAT) the chain is on the extracellular side. An intrachain disulfide couples cysteine 97 to cysteine 189. The helical transmembrane segment at 100-120 (QFAFFVGFVDAECYVLAAMAY) threads the bilayer. The Cytoplasmic segment spans residues 121–133 (DRFVAICRPLHYS). Residues 134 to 154 (TLMSKKVCLVLMLGSYFAGLV) traverse the membrane as a helical segment. The Extracellular segment spans residues 155–196 (SLVAHTSLTFSLSYCGSNIINHFFCEIPPLLALSCSDTYISE). A helical membrane pass occupies residues 197–217 (ILLFSLCGFIEFSTILIIFIS). Cysteine 203 is a binding site for Cu cation. Residues 218-237 (YAFILIAIIRIRSAEGRLKA) lie on the Cytoplasmic side of the membrane. Residues 238 to 258 (FSTCGSHLTGVTLFYGTVMFM) traverse the membrane as a helical segment. Cu cation is bound by residues methionine 256 and arginine 261. At 259 to 271 (YLRPTSSYSLDQD) the chain is on the extracellular side. Residues 272–292 (KWASVFYTIIIPMLNPLIYSL) traverse the membrane as a helical segment. Topologically, residues 293–310 (RNKDVKAAFKKLIGKKPQ) are cytoplasmic.

This sequence belongs to the G-protein coupled receptor 1 family.

The protein localises to the cell membrane. Copper binding enhances receptor activity in response to odorant binding. Functionally, olfactory receptor that is activated by the binding of organosulfur odorants with thioether groups such as (methylthio)methanethiol (MTMT). The activity of this receptor is mediated by G proteins which activate adenylyl cyclase. The chain is Olfactory receptor 5AR1 from Mus musculus (Mouse).